A 536-amino-acid chain; its full sequence is Chaperonin GroEL (536 aa).

ATP contacts are provided by residues 30–33, 86–90, glycine 414, and aspartate 494; these read TLGP and DGTTT.

This sequence belongs to the chaperonin (HSP60) family. Forms a cylinder of 14 subunits composed of two heptameric rings stacked back-to-back. Interacts with the co-chaperonin GroES.

It is found in the cytoplasm. The catalysed reaction is ATP + H2O + a folded polypeptide = ADP + phosphate + an unfolded polypeptide.. Together with its co-chaperonin GroES, plays an essential role in assisting protein folding. The GroEL-GroES system forms a nano-cage that allows encapsulation of the non-native substrate proteins and provides a physical environment optimized to promote and accelerate protein folding. The chain is Chaperonin GroEL from Methanosarcina barkeri (strain Fusaro / DSM 804).